Here is a 395-residue protein sequence, read N- to C-terminus: MSKTIAINAGSSSLKWQLYQMPNEEVIAKGIVERIGLKDSIFTIKYGEGQKYEVIVDIDNHEVAVKMLLDQLIDLNILGSYDEITGVGHRVVAGGEEFKDSVVITDEVLEKIEALSELAPLHNPANAMGIKAFKHILPEIISVAVFDTSFHTTMPEHNYLYSVPREYYEKFAARKYGAHGTSHRYVSQRAAEMLGRPIEDLKIITCHLGNGASITAVDGGKSVDTSMGFTPLAGVTMGTRSGDVDASLLPYLMTKLGLTDVQDMVDILNKKSGLLGLTNGLSSDMRDIQSNLDKPEVQTAYNIFIDRIRKYIGSYVTVMNGVDAIVFTAGIGENAVGVRKDIIDGMTWFGCEIDDDKNNVHGEEAVISTDDSKIKLLLVPTDEELMIARDVERLK.

Residue asparagine 8 participates in Mg(2+) binding. Lysine 15 lines the ATP pocket. Arginine 90 lines the substrate pocket. Residue aspartate 147 is the Proton donor/acceptor of the active site. ATP contacts are provided by residues 207-211, 284-286, and 330-334; these read HLGNG, DMR, and GIGEN. A Mg(2+)-binding site is contributed by glutamate 383.

This sequence belongs to the acetokinase family. Homodimer. Requires Mg(2+) as cofactor. The cofactor is Mn(2+).

It localises to the cytoplasm. It catalyses the reaction acetate + ATP = acetyl phosphate + ADP. The protein operates within metabolic intermediate biosynthesis; acetyl-CoA biosynthesis; acetyl-CoA from acetate: step 1/2. In terms of biological role, catalyzes the formation of acetyl phosphate from acetate and ATP. Can also catalyze the reverse reaction. In Enterococcus faecalis (strain ATCC 700802 / V583), this protein is Acetate kinase.